A 465-amino-acid polypeptide reads, in one-letter code: ATP-dependent protease ATPase subunit HslU (465 aa).

Residues valine 19 and 61–66 (GVGKTE) each bind ATP. The interval 153 to 175 (LFQSDGSDGDDETTEQDSHDEIR) is disordered. ATP contacts are provided by aspartate 279, glutamate 343, and arginine 415.

It belongs to the ClpX chaperone family. HslU subfamily. In terms of assembly, a double ring-shaped homohexamer of HslV is capped on each side by a ring-shaped HslU homohexamer. The assembly of the HslU/HslV complex is dependent on binding of ATP.

Its subcellular location is the cytoplasm. Functionally, ATPase subunit of a proteasome-like degradation complex; this subunit has chaperone activity. The binding of ATP and its subsequent hydrolysis by HslU are essential for unfolding of protein substrates subsequently hydrolyzed by HslV. HslU recognizes the N-terminal part of its protein substrates and unfolds these before they are guided to HslV for hydrolysis. The polypeptide is ATP-dependent protease ATPase subunit HslU (Oceanobacillus iheyensis (strain DSM 14371 / CIP 107618 / JCM 11309 / KCTC 3954 / HTE831)).